Consider the following 246-residue polypeptide: DNA repair protein RecO (246 aa).

It belongs to the RecO family.

In terms of biological role, involved in DNA repair and RecF pathway recombination. The polypeptide is DNA repair protein RecO (Cutibacterium acnes (strain DSM 16379 / KPA171202) (Propionibacterium acnes)).